The primary structure comprises 54 residues: Small ribosomal subunit protein uS14 (54 aa).

Zn(2+) contacts are provided by Cys19, Cys22, Cys37, and Cys40.

It belongs to the universal ribosomal protein uS14 family. Zinc-binding uS14 subfamily. In terms of assembly, part of the 30S ribosomal subunit. The cofactor is Zn(2+).

Functionally, binds 16S rRNA, required for the assembly of 30S particles. The sequence is that of Small ribosomal subunit protein uS14 from Sulfolobus acidocaldarius (strain ATCC 33909 / DSM 639 / JCM 8929 / NBRC 15157 / NCIMB 11770).